A 143-amino-acid polypeptide reads, in one-letter code: Large ribosomal subunit protein uL13 (143 aa).

The protein belongs to the universal ribosomal protein uL13 family. As to quaternary structure, part of the 50S ribosomal subunit.

Its function is as follows. This protein is one of the early assembly proteins of the 50S ribosomal subunit, although it is not seen to bind rRNA by itself. It is important during the early stages of 50S assembly. This is Large ribosomal subunit protein uL13 from Carboxydothermus hydrogenoformans (strain ATCC BAA-161 / DSM 6008 / Z-2901).